A 196-amino-acid polypeptide reads, in one-letter code: UMP-CMP kinase (196 aa).

13 to 18 (GAGKGT) provides a ligand contact to ATP. The segment at 33 to 63 (SAGDLLRDERKRPGSQYGELIENYIKEGEIV) is NMP. A ribonucleoside 5'-phosphate is bound by residues R39, 61 to 63 (EIV), and 93 to 96 (GFPR). N100 contributes to the CMP binding site. An LID region spans residues 133 to 143 (ERGKSSGRSDD). R134 serves as a coordination point for ATP. A ribonucleoside 5'-phosphate-binding residues include R140 and R151. ATP is bound at residue K179.

Belongs to the adenylate kinase family. UMP-CMP kinase subfamily. In terms of assembly, monomer. Mg(2+) is required as a cofactor.

It localises to the nucleus. The protein localises to the cytoplasm. It catalyses the reaction CMP + ATP = CDP + ADP. The enzyme catalyses dCMP + ATP = dCDP + ADP. The catalysed reaction is UMP + ATP = UDP + ADP. It carries out the reaction a 2'-deoxyribonucleoside 5'-diphosphate + ATP = a 2'-deoxyribonucleoside 5'-triphosphate + ADP. It catalyses the reaction a ribonucleoside 5'-diphosphate + ATP = a ribonucleoside 5'-triphosphate + ADP. Functionally, catalyzes the phosphorylation of pyrimidine nucleoside monophosphates at the expense of ATP. Plays an important role in de novo pyrimidine nucleotide biosynthesis. Has preference for UMP and CMP as phosphate acceptors. Also displays broad nucleoside diphosphate kinase activity. The sequence is that of UMP-CMP kinase (CMPK) from Gallus gallus (Chicken).